Reading from the N-terminus, the 504-residue chain is MNKAPAQMSRFNIAPDMDSSSTNSNEYTNYQDHASKVPLNGIQYSDVEAESQNFLSDHHLGKKKYEAEYSPGSASFGMSVFNLGNAIMGSGILGLSYAMANTGIAMFVILLVAVAIFSLYSVHLLLKTANEGGSLVYEQLGYKAFGIPGKLAASCSITMQNFGAMASYLYIVKYELPIVIRAFLDSNDNAWYTNGDYLVLIVTMSIILPLSLLKNLGYLGYTSGFSLLCMVFFLIVVIYKKFQIPCPLPENFINITVNVSQPPQTNNSTDEECCKPKYFIFNSQTVYAVPILTFAFVCHPAILPMYEELKDRSRRKMQNVANVSFLGMFIMYLLAALFGYLTFNEAVEPELLHTYSKVYNFDVVLLIVRLAVLTAVTLTVPVVLFPIRTSVNHLLGASKEFSWPRHICITVALLVCVNILVIFVPTIRDIFGFIGASAAAMLIFILPSAFYIKLVKKESMKSVQKIGATLFLIMGFLVMTGSMALIIMDWIHNALSSEEHTGGH.

Residues 1–28 form a disordered region; the sequence is MNKAPAQMSRFNIAPDMDSSSTNSNEYT. Residues 1-79 lie on the Cytoplasmic side of the membrane; the sequence is MNKAPAQMSR…SPGSASFGMS (79 aa). The regulates protein turnover upon amino acid deprivation stretch occupies residues 1-99; it reads MNKAPAQMSR…SGILGLSYAM (99 aa). Residues 19-28 are compositionally biased toward low complexity; the sequence is SSSTNSNEYT. The chain crosses the membrane as a helical span at residues 80 to 99; it reads VFNLGNAIMGSGILGLSYAM. A Na(+)-binding site is contributed by N85. Residues 100-105 lie on the Extracellular side of the membrane; the sequence is ANTGIA. The helical transmembrane segment at 106–126 threads the bilayer; that stretch reads MFVILLVAVAIFSLYSVHLLL. The Cytoplasmic portion of the chain corresponds to 127-161; the sequence is KTANEGGSLVYEQLGYKAFGIPGKLAASCSITMQN. A helical transmembrane segment spans residues 162-180; sequence FGAMASYLYIVKYELPIVI. At 181–189 the chain is on the extracellular side; that stretch reads RAFLDSNDN. A helical membrane pass occupies residues 190–210; the sequence is AWYTNGDYLVLIVTMSIILPL. Residues 211–218 lie on the Cytoplasmic side of the membrane; sequence SLLKNLGY. A helical transmembrane segment spans residues 219 to 239; it reads LGYTSGFSLLCMVFFLIVVIY. Residues 240–285 lie on the Extracellular side of the membrane; sequence KKFQIPCPLPENFINITVNVSQPPQTNNSTDEECCKPKYFIFNSQT. A disulfide bridge connects residues C246 and C274. 2 N-linked (GlcNAc...) asparagine glycosylation sites follow: N254 and N258. A helical membrane pass occupies residues 286–306; the sequence is VYAVPILTFAFVCHPAILPMY. Over 307 to 322 the chain is Cytoplasmic; the sequence is EELKDRSRRKMQNVAN. A helical transmembrane segment spans residues 323 to 343; sequence VSFLGMFIMYLLAALFGYLTF. Topologically, residues 344-364 are extracellular; sequence NEAVEPELLHTYSKVYNFDVV. A helical membrane pass occupies residues 365-385; the sequence is LLIVRLAVLTAVTLTVPVVLF. Position 379 (T379) interacts with Na(+). Residues 386-406 are Cytoplasmic-facing; it reads PIRTSVNHLLGASKEFSWPRH. A helical membrane pass occupies residues 407–427; it reads ICITVALLVCVNILVIFVPTI. The Extracellular portion of the chain corresponds to 428–429; that stretch reads RD. Residues 430–450 traverse the membrane as a helical segment; the sequence is IFGFIGASAAAMLIFILPSAF. Over 451-465 the chain is Cytoplasmic; sequence YIKLVKKESMKSVQK. The chain crosses the membrane as a helical span at residues 466-488; it reads IGATLFLIMGFLVMTGSMALIIM. Over 489 to 504 the chain is Extracellular; that stretch reads DWIHNALSSEEHTGGH.

The protein belongs to the amino acid/polyamine transporter 2 family.

The protein resides in the cell membrane. The enzyme catalyses L-alanine(in) + Na(+)(in) = L-alanine(out) + Na(+)(out). The catalysed reaction is glycine(in) + Na(+)(in) = glycine(out) + Na(+)(out). It catalyses the reaction L-serine(in) + Na(+)(in) = L-serine(out) + Na(+)(out). It carries out the reaction L-proline(in) + Na(+)(in) = L-proline(out) + Na(+)(out). The enzyme catalyses L-methionine(in) + Na(+)(in) = L-methionine(out) + Na(+)(out). The catalysed reaction is L-histidine(in) + Na(+)(in) = L-histidine(out) + Na(+)(out). It catalyses the reaction L-asparagine(in) + Na(+)(in) = L-asparagine(out) + Na(+)(out). It carries out the reaction L-glutamine(in) + Na(+)(in) = L-glutamine(out) + Na(+)(out). The enzyme catalyses L-threonine(in) + Na(+)(in) = L-threonine(out) + Na(+)(out). The catalysed reaction is L-leucine(in) + Na(+)(in) = L-leucine(out) + Na(+)(out). It catalyses the reaction L-phenylalanine(in) + Na(+)(in) = L-phenylalanine(out) + Na(+)(out). Its activity is regulated as follows. Inhibited by N-methyl-D-glucamine. Inhibited by choline. Allosteric regulation of sodium ions binding by pH. In terms of biological role, symporter that cotransports neutral amino acids and sodium ions from the extracellular to the intracellular side of the cell membrane. The transport is pH-sensitive, Li(+)-intolerant, electrogenic, driven by the Na(+) electrochemical gradient and cotransports of neutral amino acids and sodium ions with a stoichiometry of 1:1. The protein is Sodium-coupled neutral amino acid symporter 2 of Danio rerio (Zebrafish).